Reading from the N-terminus, the 76-residue chain is Sec-independent protein translocase protein TatA (76 aa).

A helical transmembrane segment spans residues 1–21 (MGSFSIWHWLIVLVIVALVFG). Composition is skewed to basic and acidic residues over residues 39–50 (FKDGMKGEDDKP) and 64–76 (GTVD…KSNS). The segment at 39-76 (FKDGMKGEDDKPAAQNAAPSQVADKGTVDVEVKEKSNS) is disordered.

This sequence belongs to the TatA/E family. In terms of assembly, the Tat system comprises two distinct complexes: a TatABC complex, containing multiple copies of TatA, TatB and TatC subunits, and a separate TatA complex, containing only TatA subunits. Substrates initially bind to the TatABC complex, which probably triggers association of the separate TatA complex to form the active translocon.

Its subcellular location is the cell inner membrane. In terms of biological role, part of the twin-arginine translocation (Tat) system that transports large folded proteins containing a characteristic twin-arginine motif in their signal peptide across membranes. TatA could form the protein-conducting channel of the Tat system. The chain is Sec-independent protein translocase protein TatA from Herminiimonas arsenicoxydans.